The chain runs to 154 residues: UPF0225 protein Asuc_0343 (154 aa).

This sequence belongs to the UPF0225 family.

The sequence is that of UPF0225 protein Asuc_0343 from Actinobacillus succinogenes (strain ATCC 55618 / DSM 22257 / CCUG 43843 / 130Z).